A 618-amino-acid polypeptide reads, in one-letter code: Crinkler effector protein 16 (618 aa).

The N-terminal stretch at 1 to 19 is a signal peptide; the sequence is MVVVSLQCAIVGQAGSSFD. The LQLFLAK domain stretch occupies residues 18-57; that stretch reads FDVEIDDGAKVSKLKDAIKAKKPNDFKVVDADKLHLFLAK. Positions 58-139 are DWL domain; it reads QPVEDESGKE…NMELPSSEQI (82 aa). The short motif at 140 to 146 is the HVLVXXP motif element; the sequence is HVLVVVP. The N-linked (GlcNAc...) asparagine glycan is linked to asparagine 534.

Belongs to the Crinkler effector family.

Its subcellular location is the secreted. It localises to the host nucleus. Secreted effector that elicits necrosis in host plants, a characteristic of plant innate immunity. This chain is Crinkler effector protein 16, found in Phytophthora infestans (Potato late blight agent).